The following is a 131-amino-acid chain: MNVEFVRDEGIAIELNGRSYYVRASHLGVKDGKILLCLDFAAPTALEPVKTFLKSYSKIRGARYAVLISGEERWIYDNYLGREVDEVEERVVEVRAEEKDYRLAAAFYALIHCECGVGDEGNCLCGLPPEW.

This is an uncharacterized protein from Archaeoglobus fulgidus (strain ATCC 49558 / DSM 4304 / JCM 9628 / NBRC 100126 / VC-16).